A 222-amino-acid chain; its full sequence is Cytochrome b6 (222 aa).

The helical transmembrane segment at 39 to 59 threads the bilayer; it reads IFYCLGGLTLTCFLIQFATGF. Tyrosine 41 provides a ligand contact to heme b. Heme c is bound at residue cysteine 42. Residues arginine 90, histidine 93, arginine 94, histidine 107, and arginine 110 each contribute to the heme b site. 3 helical membrane-spanning segments follow: residues 97 to 117, 123 to 143, and 193 to 213; these read ASMM…TGGF, LTWV…VTGY, and LHTF…FLMI. Heme b contacts are provided by histidine 194 and histidine 209. Residues arginine 214 and isoleucine 218 each coordinate heme c. Serine 219 contacts heme b.

The protein belongs to the cytochrome b family. PetB subfamily. The 4 large subunits of the cytochrome b6-f complex are cytochrome b6, subunit IV (17 kDa polypeptide, PetD), cytochrome f and the Rieske protein, while the 4 small subunits are PetG, PetL, PetM and PetN. The complex functions as a dimer. Requires heme b as cofactor. It depends on heme c as a cofactor.

It localises to the cellular thylakoid membrane. Functionally, component of the cytochrome b6-f complex, which mediates electron transfer between photosystem II (PSII) and photosystem I (PSI), cyclic electron flow around PSI, and state transitions. The chain is Cytochrome b6 from Synechocystis sp. (strain ATCC 27184 / PCC 6803 / Kazusa).